A 278-amino-acid polypeptide reads, in one-letter code: Sulfur carrier protein FdhD (278 aa).

Cys-113 acts as the Cysteine persulfide intermediate in catalysis. Position 251 to 256 (251 to 256 (FCRNGR)) interacts with Mo-bis(molybdopterin guanine dinucleotide).

This sequence belongs to the FdhD family.

The protein localises to the cytoplasm. Functionally, required for formate dehydrogenase (FDH) activity. Acts as a sulfur carrier protein that transfers sulfur from IscS to the molybdenum cofactor prior to its insertion into FDH. This Shewanella oneidensis (strain ATCC 700550 / JCM 31522 / CIP 106686 / LMG 19005 / NCIMB 14063 / MR-1) protein is Sulfur carrier protein FdhD.